The chain runs to 206 residues: dITP/XTP pyrophosphatase (206 aa).

Residue 7-12 (TSNKDK) participates in substrate binding. The active-site Proton acceptor is Asp-74. Mg(2+) is bound at residue Asp-74. Substrate-binding positions include Ser-75, 159–162 (FGYD), Lys-182, and 187–188 (HR).

The protein belongs to the HAM1 NTPase family. Homodimer. The cofactor is Mg(2+).

The catalysed reaction is XTP + H2O = XMP + diphosphate + H(+). It carries out the reaction dITP + H2O = dIMP + diphosphate + H(+). It catalyses the reaction ITP + H2O = IMP + diphosphate + H(+). Its function is as follows. Pyrophosphatase that catalyzes the hydrolysis of nucleoside triphosphates to their monophosphate derivatives, with a high preference for the non-canonical purine nucleotides XTP (xanthosine triphosphate), dITP (deoxyinosine triphosphate) and ITP. Seems to function as a house-cleaning enzyme that removes non-canonical purine nucleotides from the nucleotide pool, thus preventing their incorporation into DNA/RNA and avoiding chromosomal lesions. This chain is dITP/XTP pyrophosphatase, found in Campylobacter hominis (strain ATCC BAA-381 / DSM 21671 / CCUG 45161 / LMG 19568 / NCTC 13146 / CH001A).